Here is a 462-residue protein sequence, read N- to C-terminus: Arginine-specific demethylase JMJ20 (462 aa).

Positions 115-287 (VKEYPDYTAY…WVWDLLWKDY (173 aa)) constitute a JmjC domain. Fe cation is bound by residues H177, D179, and H255.

This sequence belongs to the JARID1 histone demethylase family. Fe(2+) serves as cofactor. In terms of tissue distribution, mostly expressed in leaves, and, to a lower extent, in inflorescences, roots, siliques and stems.

It is found in the nucleus. The catalysed reaction is N(omega),N(omega)-dimethyl-L-arginyl-[protein] + 2-oxoglutarate + O2 = N(omega)-methyl-L-arginyl-[protein] + formaldehyde + succinate + CO2. Functionally, histone demethylase that demethylates 'Arg-3' (H4R3me) of histone H4 with a specific activity for H4R3me2. Involved in the positive regulation of gene expression. Together with JMJ22, positively regulates seed germination by promoting the removal of repressive histone arginine methylations (e.g. H4R3me2) at GA3ox1 and GA3ox2 to trigger gibberellic acid (GA) biosynthesis. This is Arginine-specific demethylase JMJ20 from Arabidopsis thaliana (Mouse-ear cress).